Here is a 707-residue protein sequence, read N- to C-terminus: ATP-dependent RNA helicase DHX33 (707 aa).

A disordered region spans residues 1-64 (MPEEAGFPPA…LAQPSASPYP (64 aa)). The segment at 1–80 (MPEEAGFPPA…RRSLPIFQAR (80 aa)) is required for nucleolar location. Residues 39–49 (GSGGRGGGGGR) show a composition bias toward gly residues. Residues 50–64 (RQQPPLAQPSASPYP) are compositionally biased toward low complexity. A Helicase ATP-binding domain is found at 84–252 (LAQLRNLDNA…FNGAPVLYLE (169 aa)). Residue 97–104 (GETGSGKT) coordinates ATP. A DEAH box motif is present at residues 194–197 (DEAH). The Helicase C-terminal domain occupies 277 to 450 (SVFQIHQEAP…SVMLQLLAMK (174 aa)). An HA2; required for interaction with EIF3G and RPL26 region spans residues 471-562 (AIAQLDLLGA…ISSEGDHMTL (92 aa)). The Critical for rDNA-binding motif lies at 547–558 (GVRKKFISSEGD).

The protein belongs to the DEAD box helicase family. DEAH subfamily. In terms of assembly, interacts with UBTF. Interacts with DDX3X, EIF3G and EIF3H; the interaction is independent of RNA. Interacts (via HA2 region and Helicase C-terminal domain) with the components of the large ribosomal subunit RPL3, RPL7, RPL26 and RPL27. Interacts (via DEAH box) with NLRP3 (via NACHT domain). Binds to mRNA. Binds to double-stranded RNA (via the helicase C-terminal domain). Interacts (via the helicase C-terminal domain) with MAVS. In terms of processing, ubiquitinated, leading to its degradation by the proteasome. Deubiquitinated by USP36.

It localises to the nucleus. Its subcellular location is the nucleolus. The protein localises to the nucleoplasm. The protein resides in the cytoplasm. It is found in the inflammasome. It catalyses the reaction ATP + H2O = ADP + phosphate + H(+). Implicated in nucleolar organization, ribosome biogenesis, protein synthesis and cytoplasmic dsRNA sensing. Stimulates RNA polymerase I transcription of the 47S precursor rRNA. Associates with ribosomal DNA (rDNA) loci where it is involved in POLR1A recruitment. In the cytoplasm, promotes elongation-competent 80S ribosome assembly at the late stage of mRNA translation initiation. Senses cytosolic dsRNA mediating NLRP3 inflammasome formation in macrophages and type I interferon production in myeloid dendritic cells. Required for NLRP3 activation induced by viral dsRNA and bacterial RNA. In dendritic cells, required for induction of type I interferon production induced by cytoplasmic dsRNA via the activation of MAPK and NF-kappa-B signaling pathways. The protein is ATP-dependent RNA helicase DHX33 of Homo sapiens (Human).